The following is a 70-amino-acid chain: Small ribosomal subunit protein bS21B (70 aa).

This sequence belongs to the bacterial ribosomal protein bS21 family.

This is Small ribosomal subunit protein bS21B from Cupriavidus metallidurans (strain ATCC 43123 / DSM 2839 / NBRC 102507 / CH34) (Ralstonia metallidurans).